A 68-amino-acid chain; its full sequence is Protein P33 (68 aa).

Residues 34-63 adopt a coiled-coil conformation; it reads IVNLQGRIAELEARETEMLARVDTLIARLA.

Functionally, assembly protein. The polypeptide is Protein P33 (XXXIII) (Acinetobacter calcoaceticus (Arthrobacter siderocapsulatus)).